The chain runs to 86 residues: MHAYVYKSQRKQDTFVYLATRDDFSGLPAAVQAQLAPFTFVLDVALTPERRLAQADAATVREALGKHGFYLQLPKTIVLAGECDYD.

One can recognise a YcgL domain in the interval Met1–Cys83.

This is YcgL domain-containing protein XAC4085 from Xanthomonas axonopodis pv. citri (strain 306).